A 277-amino-acid chain; its full sequence is Carbonyl reductase [NADPH] 1 (277 aa).

Position 2 is an N-acetylserine (Ser2). Ser2 bears the Phosphoserine mark. NADP(+)-binding positions include 10 to 34, 63 to 64, and Asn90; these read VTGA…GDVV and DI. Glutathione contacts are provided by residues 95-97 and Gln106; that span reads FKV. Ser140 is a substrate binding site. Residue 193–194 participates in glutathione binding; the sequence is AY. The active-site Proton acceptor is the Tyr194. NADP(+) contacts are provided by residues 194–198 and 231–233; these read YGVTK and VRT. Lys239 carries the N6-1-carboxyethyl lysine modification. The interval 258 to 277 is disordered; it reads PPGAEGPHGQFVQDKKVEPW.

It belongs to the short-chain dehydrogenases/reductases (SDR) family. Monomer.

It is found in the cytoplasm. The enzyme catalyses a secondary alcohol + NADP(+) = a ketone + NADPH + H(+). The catalysed reaction is prostaglandin F2alpha + NADP(+) = prostaglandin E2 + NADPH + H(+). It carries out the reaction prostaglandin E1 + NADP(+) = 15-oxoprostaglandin E1 + NADPH + H(+). It catalyses the reaction menadione + NADPH + H(+) = menadiol + NADP(+). The enzyme catalyses prostaglandin D2 + NADP(+) = 15-oxoprostaglandin D2 + NADPH + H(+). The catalysed reaction is prostaglandin E2 + NADP(+) = 15-oxoprostaglandin E2 + NADPH + H(+). It carries out the reaction prostaglandin F2alpha + NADP(+) = 15-oxoprostaglandin F2alpha + NADPH + H(+). It catalyses the reaction daunorubicin + NADPH + H(+) = 13-dihydrodaunorubicin + NADP(+). The enzyme catalyses S-nitrosoglutathione + NADPH + H(+) = S-(hydroxysulfenamide)glutathione + NADP(+). The catalysed reaction is a primary alcohol + NADP(+) = an aldehyde + NADPH + H(+). It carries out the reaction cortisol + NADPH + H(+) = 20beta-dihydrocortisol + NADP(+). It catalyses the reaction corticosterone + NADPH + H(+) = 20beta-dihydrocorticosterone + NADP(+). Its function is as follows. NADPH-dependent reductase with broad substrate specificity. Catalyzes the reduction of a wide variety of carbonyl compounds including quinones, prostaglandins, menadione, plus various xenobiotics. Catalyzes the reduction of the antitumor anthracyclines doxorubicin and daunorubicin to the cardiotoxic compounds doxorubicinol and daunorubicinol. Can convert prostaglandin E to prostaglandin F2-alpha. Can bind glutathione, which explains its higher affinity for glutathione-conjugated substrates. Catalyzes the reduction of S-nitrosoglutathione. In addition, participates in the glucocorticoid metabolism by catalyzing the NADPH-dependent cortisol/corticosterone into 20beta-dihydrocortisol (20b-DHF) or 20beta-corticosterone (20b-DHB), which are weak agonists of NR3C1 and NR3C2 in adipose tissue. The chain is Carbonyl reductase [NADPH] 1 from Rattus norvegicus (Rat).